The following is a 404-amino-acid chain: Exodeoxyribonuclease 7 large subunit (404 aa).

This sequence belongs to the XseA family. As to quaternary structure, heterooligomer composed of large and small subunits.

The protein resides in the cytoplasm. It carries out the reaction Exonucleolytic cleavage in either 5'- to 3'- or 3'- to 5'-direction to yield nucleoside 5'-phosphates.. Functionally, bidirectionally degrades single-stranded DNA into large acid-insoluble oligonucleotides, which are then degraded further into small acid-soluble oligonucleotides. The sequence is that of Exodeoxyribonuclease 7 large subunit from Mesoplasma florum (strain ATCC 33453 / NBRC 100688 / NCTC 11704 / L1) (Acholeplasma florum).